Reading from the N-terminus, the 255-residue chain is Aliphatic sulfonates import ATP-binding protein SsuB (255 aa).

In terms of domain architecture, ABC transporter spans Leu12–Leu233. Residue Gly44–Ser51 participates in ATP binding.

The protein belongs to the ABC transporter superfamily. Aliphatic sulfonates importer (TC 3.A.1.17.2) family. The complex is composed of two ATP-binding proteins (SsuB), two transmembrane proteins (SsuC) and a solute-binding protein (SsuA).

The protein localises to the cell inner membrane. It carries out the reaction ATP + H2O + aliphatic sulfonate-[sulfonate-binding protein]Side 1 = ADP + phosphate + aliphatic sulfonateSide 2 + [sulfonate-binding protein]Side 1.. Its function is as follows. Part of the ABC transporter complex SsuABC involved in aliphatic sulfonates import. Responsible for energy coupling to the transport system. The polypeptide is Aliphatic sulfonates import ATP-binding protein SsuB (Escherichia coli (strain K12)).